We begin with the raw amino-acid sequence, 260 residues long: tRNA pseudouridine synthase A (260 aa).

Asp51 functions as the Nucleophile in the catalytic mechanism. A substrate-binding site is contributed by Tyr109.

This sequence belongs to the tRNA pseudouridine synthase TruA family. Homodimer.

It carries out the reaction uridine(38/39/40) in tRNA = pseudouridine(38/39/40) in tRNA. Formation of pseudouridine at positions 38, 39 and 40 in the anticodon stem and loop of transfer RNAs. The sequence is that of tRNA pseudouridine synthase A from Methylibium petroleiphilum (strain ATCC BAA-1232 / LMG 22953 / PM1).